A 1007-amino-acid polypeptide reads, in one-letter code: Integrator complex subunit 8 (1007 aa).

The WFEF motif signature appears at 19 to 24 (WFEFLL). Positions 56–78 (TAQESVGTPGSDLQNLNQTPSNS) are enriched in polar residues. The segment at 56 to 112 (TAQESVGTPGSDLQNLNQTPSNSGPIPGVVGGAPAPTTPTASGGVGMPHSPQRPAEK) is disordered. The segment covering 79 to 97 (GPIPGVVGGAPAPTTPTAS) has biased composition (low complexity).

This sequence belongs to the Integrator subunit 8 family. In terms of assembly, belongs to the multiprotein complex Integrator, at least composed of IntS1, IntS2, IntS3, IntS4, omd/IntS5, IntS6, defl/IntS7, IntS8, IntS9, IntS10, IntS11, IntS12, asun/IntS13, IntS14 and IntS15. The core complex associates with protein phosphatase 2A subunits mts/PP2A and Pp2A-29B, to form the Integrator-PP2A (INTAC) complex.

Its subcellular location is the nucleus. The protein localises to the chromosome. Its function is as follows. Component of the integrator complex, a multiprotein complex that terminates RNA polymerase II (Pol II) transcription in the promoter-proximal region of genes. The integrator complex provides a quality checkpoint during transcription elongation by driving premature transcription termination of transcripts that are unfavorably configured for transcriptional elongation: the complex terminates transcription by (1) catalyzing dephosphorylation of the C-terminal domain (CTD) of Pol II subunit Polr2A/Rbp1 and Spt5, and (2) degrading the exiting nascent RNA transcript via endonuclease activity. The integrator complex is also involved in the 3'-end processing of the U7 snRNA, and also the spliceosomal snRNAs U1, U2, U4 and U5. Within the integrator complex, INTS8 is required for the recruitment of protein phosphatase 2A (PP2A) to transcription pause-release checkpoint. This chain is Integrator complex subunit 8, found in Drosophila melanogaster (Fruit fly).